An 893-amino-acid chain; its full sequence is AP-4 complex accessory subunit RUSC1 (893 aa).

Disordered stretches follow at residues 31–223 (ELRE…GKAE), 237–332 (EKTE…KDRS), 339–358 (SPDTELPPTGSLGGSLAPPR), and 366–444 (LRSR…RAHA). Residues 77–87 (HGSSIENQQDP) show a composition bias toward polar residues. 2 stretches are compositionally biased toward low complexity: residues 95-117 (SPSDPGCSSSLSSCSDLSPDESP) and 149-165 (PSTCSPDSFCCSPDSCS). A compositionally biased stretch (polar residues) spans 177–187 (SNCNALTTCQD). Positions 237 to 257 (EKTEAGWKTIEDSDSGRKTDE) are enriched in basic and acidic residues. Pro residues-rich tracts occupy residues 373-382 (QPPPVPPRDP) and 390-399 (PPRPPPPPVP). The tract at residues 463-598 (MAEAQSGTGQ…FHAFILGLLN (136 aa)) is interaction with TRAF6. One can recognise an RUN domain in the interval 515–659 (DVGHLVLTTL…LTFHLDLLFE (145 aa)). An interaction with IKBKG region spans residues 599–665 (TKQLELWFSS…LLFEHHHHLP (67 aa)). Disordered stretches follow at residues 700-721 (RGTSGESTTDSSTPSARPPAGS) and 751-772 (HGTTAEAAQEAPPPTEQTTPGR). Low complexity-rich tracts occupy residues 702–714 (TSGESTTDSSTPS) and 754–770 (TAEAAQEAPPPTEQTTP). In terms of domain architecture, SH3 spans 835–893 (QADRAVRALCDHTAAGPDQLSFQRGELLRVIATVDEDWLRCGRDGVEGLVPVGYTSLVL).

As to quaternary structure, associated component of the adapter-like complex 4 (AP-4). Interacts with IKBKG and TRAF6. Interacts with F-actin, acetylated actin, TUBB3, STX1A, KIF5B and KLC1. Post-translationally, phosphorylated on serine residues following nuclear translocation. Polyubiquitinated; polyubiquitination involves TRAF6. Expressed in brain, brain stem and spinal cord (at protein level).

Its subcellular location is the cytoplasm. It is found in the nucleus. The protein localises to the cytoskeleton. It localises to the cytoplasmic vesicle. The protein resides in the early endosome. Its subcellular location is the postsynaptic density. It is found in the golgi apparatus. Its function is as follows. Associates with the adapter-like complex 4 (AP-4) and may therefore play a role in vesicular trafficking of proteins at the trans-Golgi network. Signaling adapter which plays a role in neuronal differentiation. Involved in regulation of NGF-dependent neurite outgrowth. May play a role in neuronal vesicular trafficking, specifically involving pre-synaptic membrane proteins. Seems to be involved in signaling pathways that are regulated by the prolonged activation of MAPK. Can regulate the polyubiquitination of IKBKG and thus may be involved in regulation of the NF-kappa-B pathway. The polypeptide is AP-4 complex accessory subunit RUSC1 (Mus musculus (Mouse)).